A 212-amino-acid polypeptide reads, in one-letter code: Peptide methionine sulfoxide reductase MsrA (212 aa).

The active site involves cysteine 52.

Belongs to the MsrA Met sulfoxide reductase family.

It catalyses the reaction L-methionyl-[protein] + [thioredoxin]-disulfide + H2O = L-methionyl-(S)-S-oxide-[protein] + [thioredoxin]-dithiol. The enzyme catalyses [thioredoxin]-disulfide + L-methionine + H2O = L-methionine (S)-S-oxide + [thioredoxin]-dithiol. Its function is as follows. Has an important function as a repair enzyme for proteins that have been inactivated by oxidation. Catalyzes the reversible oxidation-reduction of methionine sulfoxide in proteins to methionine. This Shigella dysenteriae serotype 1 (strain Sd197) protein is Peptide methionine sulfoxide reductase MsrA.